Consider the following 182-residue polypeptide: Adenine phosphoribosyltransferase (182 aa).

The protein belongs to the purine/pyrimidine phosphoribosyltransferase family. In terms of assembly, homodimer.

The protein resides in the cytoplasm. The enzyme catalyses AMP + diphosphate = 5-phospho-alpha-D-ribose 1-diphosphate + adenine. It functions in the pathway purine metabolism; AMP biosynthesis via salvage pathway; AMP from adenine: step 1/1. Catalyzes a salvage reaction resulting in the formation of AMP, that is energically less costly than de novo synthesis. The polypeptide is Adenine phosphoribosyltransferase (Campylobacter jejuni subsp. jejuni serotype O:2 (strain ATCC 700819 / NCTC 11168)).